A 493-amino-acid polypeptide reads, in one-letter code: Glutamyl-tRNA(Gln) amidotransferase subunit A (493 aa).

Active-site charge relay system residues include Lys-79 and Ser-159. The Acyl-ester intermediate role is filled by Ser-183.

Belongs to the amidase family. GatA subfamily. As to quaternary structure, heterotrimer of A, B and C subunits.

The enzyme catalyses L-glutamyl-tRNA(Gln) + L-glutamine + ATP + H2O = L-glutaminyl-tRNA(Gln) + L-glutamate + ADP + phosphate + H(+). Functionally, allows the formation of correctly charged Gln-tRNA(Gln) through the transamidation of misacylated Glu-tRNA(Gln) in organisms which lack glutaminyl-tRNA synthetase. The reaction takes place in the presence of glutamine and ATP through an activated gamma-phospho-Glu-tRNA(Gln). This Rhizobium johnstonii (strain DSM 114642 / LMG 32736 / 3841) (Rhizobium leguminosarum bv. viciae) protein is Glutamyl-tRNA(Gln) amidotransferase subunit A.